Consider the following 1150-residue polypeptide: MKQIKKLLVANRGEIAIRIFRAAAELDISTVAIYSNEDKSSLHRYKADESYLVGSDLGPAESYLNIERIIDVAKQANVDAIHPGYGFLSENEQFARRCAEEGIKFIGPHLEHLDMFGDKVKARTTAIKADLPVIPGTDGPIKSYELAKEFAEEAGFPLMIKATSGGGGKGMRIVREESELEDAFHRAKSEAEKSFGNSEVYIERYIDNPKHIEVQVIGDEHGNIVHLFERDCSVQRRHQKVVEVAPSVGLSPTLRQRICDAAIQLMENIKYVNAGTVEFLVSGDEFFFIEVNPRVQVEHTITEMVTGIDIVKTQILVAAGADLFGEEINMPQQKDITTLGYAIQCRITTEDPLNDFMPDTGTIIAYRSSGGFGVRLDAGDGFQGAEISPYYDSLLVKLSTHAISFKQAEEKMVRSLREMRIRGVKTNIPFLINVMKNKKFTSGDYTTKFIEETPELFDIQPSLDRGTKTLEYIGNVTINGFPNVEKRPKPDYELASIPTVSSSKIASFSGTKQLLDEVGPKGVAEWVKKQDDVLLTDTTFRDAHQSLLATRVRTKDMINIASKTADVFKDGFSLEMWGGATFDVAYNFLKENPWERLERLRKAIPNVLFQMLLRASNAVGYKNYPDNVIHKFVQESAKAGIDVFRIFDSLNWVDQMKVANEAVQEAGKISEGTICYTGDILNPERSNIYTLEYYVKLAKELEREGFHILAIKDMAGLLKPKAAYELIGELKSAVDLPIHLHTHDTSGNGLLTYKQAIDAGVDIIDTAVASMSGLTSQPSANSLYYALNGFPRHLRTDIEGMESLSHYWSTVRTYYSDFESDIKSPNTEIYQHEMPGGQYSNLSQQAKSLGLGERFDEVKDMYRRVNFLFGDIVKVTPSSKVVGDMALYMVQNDLDEQSVITDGYKLDFPESVVSFFKGEIGQPVNGFNKDLQAVILKGQEALTARPGEYLEPVDFEKVRELLEEEQQGPVTEQDIISYVLYPKVYEQYIQTRNQYGNLSLLDTPTFFFGMRNGETVEIEIDKGKRLIIKLETISEPDENGNRTIYYAMNGQARRIYIKDENVHTNANVKPKADKSNPSHIGAQMPGSVTEVKVSVGETVKANQPLLITEAMKMETTIQAPFDGVIKQVTVNNGDTIATGDLLIEIEKATD.

In terms of domain architecture, Biotin carboxylation spans 3–455; that stretch reads QIKKLLVANR…TTKFIEETPE (453 aa). Lys-119, Lys-161, His-211, and Glu-278 together coordinate ATP. Residues 123-319 form the ATP-grasp domain; sequence RTTAIKADLP…IVKTQILVAA (197 aa). Residue Arg-294 is part of the active site. Positions 533–802 constitute a Pyruvate carboxyltransferase domain; that stretch reads VLLTDTTFRD…HLRTDIEGME (270 aa). Residue 541–545 coordinates substrate; that stretch reads RDAHQ. 4 residues coordinate Mn(2+): Asp-542, Lys-712, His-741, and His-743. An N6-carboxylysine modification is found at Lys-712. In terms of domain architecture, Biotinyl-binding spans 1071 to 1146; sequence KADKSNPSHI…ATGDLLIEIE (76 aa). N6-biotinyllysine is present on Lys-1112.

As to quaternary structure, homotetramer. The cofactor is biotin.

The enzyme catalyses hydrogencarbonate + pyruvate + ATP = oxaloacetate + ADP + phosphate + H(+). In terms of biological role, catalyzes a 2-step reaction, involving the ATP-dependent carboxylation of the covalently attached biotin in the first step and the transfer of the carboxyl group to pyruvate in the second. This chain is Pyruvate carboxylase (pycA), found in Staphylococcus aureus (strain Mu50 / ATCC 700699).